The chain runs to 406 residues: NAC transcription factor NAM-B1 (406 aa).

A compositionally biased stretch (polar residues) spans 1–11 (MGSPDSSSGSA). The tract at residues 1-40 (MGSPDSSSGSAQKPPRHQHQHQPPPPRRQGSAPELPPGFR) is disordered. The 170-residue stretch at 35 to 204 (LPPGFRFHPT…DWVLCRIYKK (170 aa)) folds into the NAC domain. Residues 137 to 210 (VGVKKALVFY…IYKKTSKAAA (74 aa)) mediate DNA binding.

The protein localises to the nucleus. Functionally, transcription factor of the NAC family associated with the grain protein content (GPC). Sequences of the 11 European varieties of H.vulgare tested belongs to the same haplotype while the sequence found in H.spontaneum, an ancestor of the cultivated H.vulgare which has a higher GPC, belongs to an other haplotype. The sequence is that of NAC transcription factor NAM-B1 (NAM-B1) from Hordeum vulgare subsp. spontaneum (Wild barley).